Here is a 626-residue protein sequence, read N- to C-terminus: MKSYKLNNPNLLISTHTHNKLFLSSSPFNLLFSFPSFIYLKQQRSLFFFFFFFLCFSFTTSMLDSDTDTDSGPVVATTKLVTFLQRVQHTALRSYPKKQTPDPKSYIDLSLKRPYSLSTIESAFDDLTSESHDQPVPVETLEKFVKEYFDGAGEDLLHHEPVDFVSDPSGFLSNVENEEVREWAREVHGLWRNLSCRVSDSVRESADRHTLLPLPEPVIIPGSRFREVYYWDSYWVIKGLMTSQMFTTAKGLVTNLMSLVETYGYALNGARAYYTNRSQPPLLSSMVYEIYNVTKDEELVRKAIPLLLKEYEFWNSGKHKVVIRDANGYDHVLSRYYAMWNKPRPESSVFDEESASGFSTMLEKQRFHRDIATAAESGCDFSTRWMRDPPNFTTMATTSVVPVDLNVFLLKMELDIAFMMKVSGDQNGSDRFVKASKAREKAFQTVFWNEKAGQWLDYWLSSSGEESETWKAENQNTNVFASNFAPIWINSINSDENLVKKVVTALKNSGLIAPAGILTSLTNSGQQWDSPNGWAPQQEMIVTGLGRSSVKEAKEMAEDIARRWIKSNYLVYKKSGTIHEKLKVTELGEYGGGGEYMPQTGFGWSNGVILAFLEEYGWPSHLSIEA.

Transmembrane regions (helical) follow at residues 20 to 40 (KLFL…FIYL) and 45 to 65 (SLFF…MLDS). The alpha,alpha-trehalose site is built by Arg-224, Asp-232, Asn-268, Arg-277, Gln-279, Arg-344, and Glu-346. Catalysis depends on proton donor/acceptor residues Asp-380 and Glu-580. Alpha,alpha-trehalose is bound by residues Glu-580 and Glu-595.

Belongs to the glycosyl hydrolase 37 family. Forms homodimers. In terms of tissue distribution, highly expressed in flowers. Expressed at low levels in leaves and stems. Expressed in guard cells.

It is found in the cell membrane. Its subcellular location is the cytoplasm. The protein resides in the nucleus. The enzyme catalyses alpha,alpha-trehalose + H2O = alpha-D-glucose + beta-D-glucose. Functionally, involved in the regulation of trehalose content by hydrolyzing trehalose to glucose. May play a role in the regulation of abscisic acid-induced stomatal closure in response to drought stress. This chain is Trehalase (TRE1), found in Arabidopsis thaliana (Mouse-ear cress).